Here is a 455-residue protein sequence, read N- to C-terminus: Tumor necrosis factor receptor superfamily member 1A (455 aa).

An N-terminal signal peptide occupies residues 1–29 (MGLSTVPDLLLPLVLLELLVGIYPSGVIG). At 30–211 (LVPHLGDREK…VKGTEDSGTT (182 aa)) the chain is on the extracellular side. TNFR-Cys repeat units lie at residues 43–82 (VCPQ…TDCR), 83–125 (ECES…DTVC), 126–166 (GCRK…NTVC), and 167–196 (TCHA…KLCL). Cystine bridges form between C44-C58, C59-C72, C62-C81, C84-C99, C102-C117, C105-C125, and C127-C143. N54 carries an N-linked (GlcNAc...) asparagine glycan. 2 N-linked (GlcNAc...) asparagine glycosylation sites follow: N145 and N151. 5 cysteine pairs are disulfide-bonded: C146–C158, C149–C166, C168–C179, C182–C195, and C185–C191. The chain crosses the membrane as a helical span at residues 212 to 232 (VLLPLVIFFGLCLLSLLFIGL). Residues 233-455 (MYRYQRWKSK…ALPPAPSLLR (223 aa)) are Cytoplasmic-facing. The tract at residues 254–273 (EKEGELEGTTTKPLAPNPSF) is disordered. Residues 338–348 (LQKWEDSAHKP) are N-SMase activation domain (NSD). Positions 356 to 441 (PATLYAVVEN…GCLEDIEEAL (86 aa)) constitute a Death domain. A (Microbial infection) N-beta-linked (GlcNAc) arginine glycan is attached at R376.

In terms of assembly, binding of TNF to the extracellular domain leads to homotrimerization. The aggregated death domains provide a novel molecular interface that interacts specifically with the death domain of TRADD. Various TRADD-interacting proteins such as TRAFS, RIPK1 and possibly FADD, are recruited to the complex by their association with TRADD. This complex activates at least two distinct signaling cascades, apoptosis and NF-kappa-B signaling. Interacts with BAG4, BABAM2, FEM1B, GRB2, SQSTM1 and TRPC4AP. Interacts directly with NOL3 (via CARD domain); inhibits TNF-signaling pathway. Interacts with SH3RF2, TRADD and RIPK1. SH3RF2 facilitates the recruitment of RIPK1 and TRADD to TNFRSF1A in a TNF-alpha-dependent process. Interacts with PGLYRP1; this interaction is important for cell death induction. Interacts (via death domain) with MADD (via death domain). (Microbial infection) Interacts with mumps virus protein SH; this interaction inhibits downstream NF-kappa-B pathway activation. As to quaternary structure, (Microbial infection) Interacts with HCV core protein. In terms of assembly, (Microbial infection) Interacts with human cytomegalovirus/HHV-5 protein UL138. (Microbial infection) Interacts with host TNFRSF1A; this interaction leads to the stimulation of both surface expression and shedding of TNFRSF1A. In terms of processing, the soluble form is produced from the membrane form by proteolytic processing. (Microbial infection) Glycosylated at Arg-376 by enteropathogenic E.coli protein NleB1 and S.typhimurium protein Ssek3: arginine GlcNAcylation prevents homotypic/heterotypic death domain interactions.

It is found in the cell membrane. It localises to the golgi apparatus membrane. The protein resides in the secreted. In terms of biological role, receptor for TNFSF2/TNF-alpha and homotrimeric TNFSF1/lymphotoxin-alpha. The adapter molecule FADD recruits caspase-8 to the activated receptor. The resulting death-inducing signaling complex (DISC) performs caspase-8 proteolytic activation which initiates the subsequent cascade of caspases (aspartate-specific cysteine proteases) mediating apoptosis. Contributes to the induction of non-cytocidal TNF effects including anti-viral state and activation of the acid sphingomyelinase. This chain is Tumor necrosis factor receptor superfamily member 1A (TNFRSF1A), found in Homo sapiens (Human).